The sequence spans 363 residues: DNA replication and repair protein RecF (363 aa).

33-40 (GDNGQGKT) lines the ATP pocket.

This sequence belongs to the RecF family.

It is found in the cytoplasm. In terms of biological role, the RecF protein is involved in DNA metabolism; it is required for DNA replication and normal SOS inducibility. RecF binds preferentially to single-stranded, linear DNA. It also seems to bind ATP. The chain is DNA replication and repair protein RecF from Tropheryma whipplei (strain TW08/27) (Whipple's bacillus).